Consider the following 199-residue polypeptide: Golgi to ER traffic protein 1 (199 aa).

Over Met-1–Ile-11 the chain is Lumenal. Residues Leu-12–Ser-31 form a helical membrane-spanning segment. Over Thr-32–Ile-115 the chain is Cytoplasmic. A coiled-coil region spans residues Tyr-76–Leu-116. Residues Leu-116–Phe-136 traverse the membrane as a helical segment. Residues Tyr-137 to Ala-160 lie on the Lumenal side of the membrane. A helical membrane pass occupies residues Val-161 to Phe-177. At Ser-178–Glu-199 the chain is on the cytoplasmic side.

It belongs to the WRB/GET1 family. In terms of assembly, component of the Golgi to ER traffic (GET) complex, which is composed of GET1, GET2 and GET3. Within the complex, GET1 and GET2 form a heterotetramer which is stabilized by phosphatidylinositol binding and which binds to the GET3 homodimer.

It is found in the endoplasmic reticulum membrane. The protein localises to the golgi apparatus membrane. Its function is as follows. Required for the post-translational delivery of tail-anchored (TA) proteins to the endoplasmic reticulum. Together with GET2, acts as a membrane receptor for soluble GET3, which recognizes and selectively binds the transmembrane domain of TA proteins in the cytosol. The GET complex cooperates with the HDEL receptor ERD2 to mediate the ATP-dependent retrieval of resident ER proteins that contain a C-terminal H-D-E-L retention signal from the Golgi to the ER. In Candida albicans (strain SC5314 / ATCC MYA-2876) (Yeast), this protein is Golgi to ER traffic protein 1.